A 79-amino-acid chain; its full sequence is Acyl carrier protein (79 aa).

The Carrier domain occupies 2–77 (ENIEQRVKKI…QAIDYVTAHL (76 aa)). S37 carries the O-(pantetheine 4'-phosphoryl)serine modification.

Belongs to the acyl carrier protein (ACP) family. 4'-phosphopantetheine is transferred from CoA to a specific serine of apo-ACP by AcpS. This modification is essential for activity because fatty acids are bound in thioester linkage to the sulfhydryl of the prosthetic group.

It localises to the cytoplasm. Its pathway is lipid metabolism; fatty acid biosynthesis. Carrier of the growing fatty acid chain in fatty acid biosynthesis. The polypeptide is Acyl carrier protein (Laribacter hongkongensis (strain HLHK9)).